The sequence spans 539 residues: BTB/POZ domain-containing protein 6 (539 aa).

The first 23 residues, 1 to 23 (MLLPLACLHGRVAQCLTSLLVLA), serve as a signal peptide directing secretion. One can recognise a BTB domain in the interval 137 to 207 (ADVHFIVGAL…MYSDEIDLEA (71 aa)).

Its subcellular location is the cytoplasm. Adapter protein for the cul3 E3 ubiquitin-protein ligase complex. Involved in late neuronal development and muscle formation. The chain is BTB/POZ domain-containing protein 6 (Btbd6) from Mus musculus (Mouse).